Reading from the N-terminus, the 345-residue chain is Matrix protein (345 aa).

Positions Lys148 to Ser185 are disordered. The span at Glu164–Gly173 shows a compositional bias: basic and acidic residues.

It localises to the virion. The protein is Matrix protein (M2) of Aphis (Hairy beggarticks).